The primary structure comprises 256 residues: tRNA pseudouridine synthase A (256 aa).

The Nucleophile role is filled by D43. Y94 is a substrate binding site.

This sequence belongs to the tRNA pseudouridine synthase TruA family.

It carries out the reaction uridine(38/39/40) in tRNA = pseudouridine(38/39/40) in tRNA. Functionally, formation of pseudouridine at positions 38, 39 and 40 in the anticodon stem and loop of transfer RNAs. This chain is tRNA pseudouridine synthase A, found in Pyrobaculum aerophilum (strain ATCC 51768 / DSM 7523 / JCM 9630 / CIP 104966 / NBRC 100827 / IM2).